A 196-amino-acid polypeptide reads, in one-letter code: Proteasome subunit beta 1 (196 aa).

The propeptide at 1 to 6 (MEELPA) is removed in mature form; by autocatalysis. The active-site Nucleophile is the Thr-7.

The protein belongs to the peptidase T1B family. As to quaternary structure, the 20S proteasome core is composed of 14 alpha and 14 beta subunits that assemble into four stacked heptameric rings, resulting in a barrel-shaped structure. The two inner rings, each composed of seven catalytic beta subunits, are sandwiched by two outer rings, each composed of seven alpha subunits. The catalytic chamber with the active sites is on the inside of the barrel. Has a gated structure, the ends of the cylinder being occluded by the N-termini of the alpha-subunits. Is capped at one or both ends by the proteasome regulatory ATPase, PAN.

It localises to the cytoplasm. The catalysed reaction is Cleavage of peptide bonds with very broad specificity.. Its activity is regulated as follows. The formation of the proteasomal ATPase PAN-20S proteasome complex, via the docking of the C-termini of PAN into the intersubunit pockets in the alpha-rings, triggers opening of the gate for substrate entry. Interconversion between the open-gate and close-gate conformations leads to a dynamic regulation of the 20S proteasome proteolysis activity. Component of the proteasome core, a large protease complex with broad specificity involved in protein degradation. The protein is Proteasome subunit beta 1 of Saccharolobus islandicus (strain Y.N.15.51 / Yellowstone #2) (Sulfolobus islandicus).